We begin with the raw amino-acid sequence, 126 residues long: Large ribosomal subunit protein bL12 (126 aa).

Belongs to the bacterial ribosomal protein bL12 family. Homodimer. Part of the ribosomal stalk of the 50S ribosomal subunit. Forms a multimeric L10(L12)X complex, where L10 forms an elongated spine to which 2 to 4 L12 dimers bind in a sequential fashion. Binds GTP-bound translation factors.

Forms part of the ribosomal stalk which helps the ribosome interact with GTP-bound translation factors. Is thus essential for accurate translation. The sequence is that of Large ribosomal subunit protein bL12 from Legionella pneumophila (strain Paris).